Reading from the N-terminus, the 266-residue chain is Nickel import ATP-binding protein NikE (266 aa).

The ABC transporter domain occupies 4-252 (ISADNIVKIY…RHPASRLLRE (249 aa)). 45-52 (GRSGCGKS) is a binding site for ATP.

It belongs to the ABC transporter superfamily. Nickel importer (TC 3.A.1.5.3) family. As to quaternary structure, the complex is composed of two ATP-binding proteins (NikD and NikE), two transmembrane proteins (NikB and NikC) and a solute-binding protein (NikA).

It localises to the cell inner membrane. The enzyme catalyses Ni(2+)(out) + ATP + H2O = Ni(2+)(in) + ADP + phosphate + H(+). In terms of biological role, part of the ABC transporter complex NikABCDE involved in nickel import. Responsible for energy coupling to the transport system. The chain is Nickel import ATP-binding protein NikE from Brucella abortus (strain 2308).